The sequence spans 114 residues: MRKSYRVKKETEFQQVFETRNSYANRQFVIYVLEKPGQPHFRVGISVGKKIGNAVARNWVKRRIRQSITELKPQLKQDADFLVIARPTVAGKSQAETKAYLSHALKLAHLLDND.

It belongs to the RnpA family. As to quaternary structure, consists of a catalytic RNA component (M1 or rnpB) and a protein subunit.

The enzyme catalyses Endonucleolytic cleavage of RNA, removing 5'-extranucleotides from tRNA precursor.. Its function is as follows. RNaseP catalyzes the removal of the 5'-leader sequence from pre-tRNA to produce the mature 5'-terminus. It can also cleave other RNA substrates such as 4.5S RNA. The protein component plays an auxiliary but essential role in vivo by binding to the 5'-leader sequence and broadening the substrate specificity of the ribozyme. This chain is Ribonuclease P protein component, found in Lactiplantibacillus plantarum (strain ATCC BAA-793 / NCIMB 8826 / WCFS1) (Lactobacillus plantarum).